We begin with the raw amino-acid sequence, 1052 residues long: Multidrug resistance protein MdtB (1052 aa).

11 helical membrane passes run 15-37, 345-362, 367-389, 396-418, 438-460, 472-494, 535-557, 867-889, 909-931, 968-990, and 1000-1022; these read LFIL…GIIG, FELL…YLFL, ATII…MYFL, LTLM…VIEN, GEIG…PLLF, FAVT…TPMM, HPWL…YLLI, LWLI…ESFI, LMLT…IGIV, ILMT…GVGA, and MVGG…YLLF. The interval 1032 to 1052 is disordered; sequence KNRHRDEDIDSSELLNGQEPQ.

It belongs to the resistance-nodulation-cell division (RND) (TC 2.A.6) family. MdtB subfamily. In terms of assembly, part of a tripartite efflux system composed of MdtA, MdtB and MdtC. MdtB forms a heteromultimer with MdtC.

The protein resides in the cell inner membrane. The polypeptide is Multidrug resistance protein MdtB (Yersinia pestis).